Here is a 768-residue protein sequence, read N- to C-terminus: Vacuolar basic amino acid transporter 4 (768 aa).

Residues 1–252 (MGKKDRQRKK…HDLTRRRIFS (252 aa)) lie on the Cytoplasmic side of the membrane. The stretch at 9 to 40 (KKLREFAKLKNRQRNLRKSVQTLKNEVQREAK) forms a coiled coil. Residues 34-172 (EVQREAKVPR…ELPVSSSNSF (139 aa)) form a disordered region. S62, S99, and S106 each carry phosphoserine. The span at 110–121 (KPADKANEDDLK) shows a compositional bias: basic and acidic residues. Residues 132–159 (SALQSSITDFSDRSVSPLQSITSCNTPM) show a composition bias toward polar residues. Phosphoserine is present on residues S160 and S192. Residues 253–273 (SCMCTYLFFIAMDSSIILVIA) form a helical membrane-spanning segment. The Vacuolar portion of the chain corresponds to 274-282 (SKIASEFHE). Residues 283–305 (LWRLSLVISAYLLSNAIGQLVFL) form a helical membrane-spanning segment. Residues 306-311 (KLSLIS) are Cytoplasmic-facing. Residues 312–331 (SVKLLLCIAQFSFILGGYLS) traverse the membrane as a helical segment. Topologically, residues 332-334 (WSS) are vacuolar. The helical transmembrane segment at 335–357 (AHFWTFIFARCVTGFGGGSLIAL) threads the bilayer. Residues 358–375 (KSTIMNRFSQKNDSRYSL) lie on the Cytoplasmic side of the membrane. The chain crosses the membrane as a helical span at residues 376 to 396 (SASMITFAMGVVIGPFMMNLF). Over 397 to 406 (DSSHGSGWRN) the chain is Vacuolar. Residues 407 to 427 (AFLIPVPFCLVNASIMLADMY) form a helical membrane-spanning segment. Residues 428–447 (SVKSTLYGRPTPTLWKRFKN) are Cytoplasmic-facing. The chain crosses the membrane as a helical span at residues 448 to 468 (TLLSPDLYEILTLTLFLLCFV). Topologically, residues 469–481 (QVTSLDLTGLKNN) are vacuolar. A glycan (N-linked (GlcNAc...) asparagine) is linked at N480. The helical transmembrane segment at 482 to 502 (TMIQALLFSVIIVCGILFFLI) threads the bilayer. The Cytoplasmic portion of the chain corresponds to 503-522 (ETSDTYMNSVISMSLQGDKR). Residues 523–543 (LIWTMIGISFCFAALMCIIPF) form a helical membrane-spanning segment. Residues 544–562 (GTTYFIIVLNLSTLQLAER) lie on the Vacuolar side of the membrane. Residue N553 is glycosylated (N-linked (GlcNAc...) asparagine). The chain crosses the membrane as a helical span at residues 563-583 (LSPFFFSIVLGYFSVSYFWKS). The Cytoplasmic segment spans residues 584 to 587 (KGQN). Residues 588-608 (FLLKFVLSGATLLLYVALMGV) traverse the membrane as a helical segment. Over 609–617 (SLNLPVWKQ) the chain is Vacuolar. Residues 618-638 (YICLSLPFLGSSMILTLLSNL) form a helical membrane-spanning segment. The Cytoplasmic portion of the chain corresponds to 639-653 (YHEYHEQRKSPISGS). A helical transmembrane segment spans residues 654–674 (IVYCFGAVGGTVGISLGGYVF). The Vacuolar segment spans residues 675–734 (HKTLIKLMHEKVMPFSKQGYLKKDLLKIIKHATESSDWVHESAPKFVFQTLIECYLQACR). The chain crosses the membrane as a helical span at residues 735–755 (NVFKLSTLFFTITVVAIFIFN). Topologically, residues 756 to 768 (RIHCRSQNCLSLS) are cytoplasmic.

This sequence belongs to the major facilitator superfamily.

It localises to the vacuole membrane. In terms of biological role, transporter required for vacuolar uptake of basic amino acids. This is Vacuolar basic amino acid transporter 4 (VBA4) from Saccharomyces cerevisiae (strain ATCC 204508 / S288c) (Baker's yeast).